The chain runs to 411 residues: RNA binding protein fox-1 homolog 2 (411 aa).

A disordered region spans residues 16–175 (TRGTKRESDQ…SETKASPKRL (160 aa)). Composition is skewed to polar residues over residues 58–83 (PVSQ…TPDT) and 99–119 (NGLS…QSTE). Residues 135 to 165 (SAPATSTANASSTTDGSQTEGQQSQSQNNEN) show a composition bias toward low complexity. An RRM domain is found at 173–249 (KRLHVSNIPF…RKIEVNNATA (77 aa)).

Interacts with papd4/gld2.

It is found in the nucleus. The protein localises to the cytoplasm. RNA-binding protein that regulates alternative splicing events by binding to 5'-UGCAUGU-3' elements. Regulates alternative splicing of tissue-specific exons. In Xenopus laevis (African clawed frog), this protein is RNA binding protein fox-1 homolog 2 (rbfox2).